The sequence spans 298 residues: Protease HtpX homolog (298 aa).

The next 2 helical transmembrane spans lie at 15–35 and 39–59; these read YVMIGFAILVLFIGAAVGYVF and AMAGIIMAAVIAAIYMAMMIA. Histidine 143 contributes to the Zn(2+) binding site. The active site involves glutamate 144. Histidine 147 contributes to the Zn(2+) binding site. The next 2 membrane-spanning stretches (helical) occupy residues 158-178 and 197-217; these read IALALSSAIAMLVNIGMRSFW and IVMMIISIVLVILGPIATTIA. A Zn(2+)-binding site is contributed by glutamate 226.

This sequence belongs to the peptidase M48B family. Zn(2+) serves as cofactor.

It is found in the cell membrane. The chain is Protease HtpX homolog from Pediococcus pentosaceus (strain ATCC 25745 / CCUG 21536 / LMG 10740 / 183-1w).